Reading from the N-terminus, the 260-residue chain is Cytochrome c oxidase subunit 2 (260 aa).

Over 1–41 (MIVREWLFFTMAPCDAAEPWQLGFQDAATPMMQGIIDLHHD) the chain is Mitochondrial intermembrane. A helical membrane pass occupies residues 42–58 (IFFFLILILVFVSWILV). Residues 59–82 (RALWHFHYKKNPIPQRIVHGTTIE) lie on the Mitochondrial matrix side of the membrane. The chain crosses the membrane as a helical span at residues 83-104 (IIRTIFPSIILMFIAIPSFALL). Topologically, residues 105–260 (YSMDEVVVDP…NQLIPQTGEA (156 aa)) are mitochondrial intermembrane. Cu cation-binding residues include His-187, Cys-222, Glu-224, Cys-226, His-230, and Met-233. Glu-224 lines the Mg(2+) pocket.

It belongs to the cytochrome c oxidase subunit 2 family. As to quaternary structure, component of the cytochrome c oxidase (complex IV, CIV), a multisubunit enzyme composed of a catalytic core of 3 subunits and several supernumerary subunits. The complex exists as a monomer or a dimer and forms supercomplexes (SCs) in the inner mitochondrial membrane with ubiquinol-cytochrome c oxidoreductase (cytochrome b-c1 complex, complex III, CIII). Cu cation is required as a cofactor.

The protein localises to the mitochondrion inner membrane. It carries out the reaction 4 Fe(II)-[cytochrome c] + O2 + 8 H(+)(in) = 4 Fe(III)-[cytochrome c] + 2 H2O + 4 H(+)(out). Its function is as follows. Component of the cytochrome c oxidase, the last enzyme in the mitochondrial electron transport chain which drives oxidative phosphorylation. The respiratory chain contains 3 multisubunit complexes succinate dehydrogenase (complex II, CII), ubiquinol-cytochrome c oxidoreductase (cytochrome b-c1 complex, complex III, CIII) and cytochrome c oxidase (complex IV, CIV), that cooperate to transfer electrons derived from NADH and succinate to molecular oxygen, creating an electrochemical gradient over the inner membrane that drives transmembrane transport and the ATP synthase. Cytochrome c oxidase is the component of the respiratory chain that catalyzes the reduction of oxygen to water. Electrons originating from reduced cytochrome c in the intermembrane space (IMS) are transferred via the dinuclear copper A center (CU(A)) of subunit 2 and heme A of subunit 1 to the active site in subunit 1, a binuclear center (BNC) formed by heme A3 and copper B (CU(B)). The BNC reduces molecular oxygen to 2 water molecules using 4 electrons from cytochrome c in the IMS and 4 protons from the mitochondrial matrix. The protein is Cytochrome c oxidase subunit 2 (COX2) of Beta vulgaris (Sugar beet).